The primary structure comprises 120 residues: Holo-[acyl-carrier-protein] synthase (120 aa).

Residues Asp-8 and Glu-60 each coordinate Mg(2+).

It belongs to the P-Pant transferase superfamily. AcpS family. It depends on Mg(2+) as a cofactor.

The protein resides in the cytoplasm. The enzyme catalyses apo-[ACP] + CoA = holo-[ACP] + adenosine 3',5'-bisphosphate + H(+). Functionally, transfers the 4'-phosphopantetheine moiety from coenzyme A to a Ser of acyl-carrier-protein. The sequence is that of Holo-[acyl-carrier-protein] synthase from Anaplasma marginale (strain St. Maries).